Consider the following 150-residue polypeptide: Large ribosomal subunit protein bL9 (150 aa).

The protein belongs to the bacterial ribosomal protein bL9 family.

Binds to the 23S rRNA. This Wigglesworthia glossinidia brevipalpis protein is Large ribosomal subunit protein bL9.